The following is a 389-amino-acid chain: Brix domain-containing protein C1B9.03c (389 aa).

The region spanning 28-309 (SMVIRSGASE…LIKITEDAMG (282 aa)) is the Brix domain. Over residues 323–350 (EEIKQQDNFHEQSRALKEKRKKEQDENV) the composition is skewed to basic and acidic residues. A disordered region spans residues 323-389 (EEIKQQDNFH…EGSSAYSDTE (67 aa)). Residues 351-362 (RRKRENKKRRKD) show a composition bias toward basic residues. Phosphoserine is present on serine 377. Residues 379-389 (NEGSSAYSDTE) are compositionally biased toward polar residues.

In Schizosaccharomyces pombe (strain 972 / ATCC 24843) (Fission yeast), this protein is Brix domain-containing protein C1B9.03c.